The chain runs to 201 residues: Ras-related protein Rab-9A (201 aa).

N-acetylalanine is present on A2. G17 is a binding site for GDP. Residues G17, V18, G19, K20, S21, S22, T34, H38, and T39 each contribute to the GTP site. The GDP site is built by G19, K20, S21, and S22. S21 is a binding site for Mg(2+). A Switch 1 motif is present at residues 31–42; the sequence is KFDTQLFHTIGV. Mg(2+)-binding residues include T39 and D62. The short motif at 64-78 is the Switch 2 element; sequence AGQERFRSLRTPFYR. GTP contacts are provided by G65, N124, K125, and D127. GDP-binding residues include N124, K125, D127, A155, and K156. K156 is a binding site for GTP. Phosphoserine is present on S179. Residue T187 is modified to Phosphothreonine. Residues C200 and C201 are each lipidated (S-geranylgeranyl cysteine).

It belongs to the small GTPase superfamily. Rab family. As to quaternary structure, interacts (preferentially in its GTP-bound form) with GCC2 (via its GRIP domain). Interacts (GTP-bound form) with SGSM1; the GDP-bound form has much lower affinity for SGSM1. Interacts with SGSM2. The GTP-bound form but not the GDP-bound form interacts with HPS4 and the BLOC-3 complex (heterodimer of HPS1 and HPS4) but does not interact with HPS1 alone. Interacts (GTP-bound form) with NDE1; two RAB9A-GTP molecules lie on the opposite sides of the NDE1 homodimer; the interaction leads to RAB9A-dynein motor tethering. Interacts (GTP-bound form) with NDEL1. It depends on Mg(2+) as a cofactor.

It is found in the cell membrane. It localises to the endoplasmic reticulum membrane. The protein localises to the golgi apparatus membrane. Its subcellular location is the late endosome. The protein resides in the cytoplasmic vesicle. It is found in the phagosome membrane. It localises to the phagosome. The protein localises to the cytoplasmic vesicle membrane. Its subcellular location is the melanosome. It carries out the reaction GTP + H2O = GDP + phosphate + H(+). With respect to regulation, regulated by guanine nucleotide exchange factors (GEFs) which promote the exchange of bound GDP for free GTP. Regulated by GTPase activating proteins (GAPs) which increase the GTP hydrolysis activity. Inhibited by GDP dissociation inhibitors (GDIs). The small GTPases Rab are key regulators of intracellular membrane trafficking, from the formation of transport vesicles to their fusion with membranes. Rabs cycle between an inactive GDP-bound form and an active GTP-bound form that is able to recruit to membranes different sets of downstream effectors directly responsible for vesicle formation, movement, tethering and fusion. RAB9A is involved in the transport of proteins between the endosomes and the trans-Golgi network (TGN). Specifically uses NDE1/NDEL1 as an effector to interact with the dynein motor complex in order to control retrograde trafficking of RAB9-associated late endosomes to the TGN. Involved in the recruitment of SGSM2 to melanosomes and is required for the proper trafficking of melanogenic enzymes TYR, TYRP1 and DCT/TYRP2 to melanosomes in melanocytes. In Canis lupus familiaris (Dog), this protein is Ras-related protein Rab-9A (RAB9A).